Here is a 204-residue protein sequence, read N- to C-terminus: Protein GrpE (204 aa).

Basic and acidic residues-rich tracts occupy residues 1 to 21 and 36 to 46; these read MEEL…EVKG and EEKIETEVEQK. The segment at 1–46 is disordered; it reads MEELEKDKIERNEEMSEEVKGEGPPSELEQSEEVVEEKIETEVEQK.

Belongs to the GrpE family. Homodimer.

The protein localises to the cytoplasm. Functionally, participates actively in the response to hyperosmotic and heat shock by preventing the aggregation of stress-denatured proteins, in association with DnaK and GrpE. It is the nucleotide exchange factor for DnaK and may function as a thermosensor. Unfolded proteins bind initially to DnaJ; upon interaction with the DnaJ-bound protein, DnaK hydrolyzes its bound ATP, resulting in the formation of a stable complex. GrpE releases ADP from DnaK; ATP binding to DnaK triggers the release of the substrate protein, thus completing the reaction cycle. Several rounds of ATP-dependent interactions between DnaJ, DnaK and GrpE are required for fully efficient folding. The polypeptide is Protein GrpE (Caldanaerobacter subterraneus subsp. tengcongensis (strain DSM 15242 / JCM 11007 / NBRC 100824 / MB4) (Thermoanaerobacter tengcongensis)).